The primary structure comprises 466 residues: MTITLYNTLTRKKETFVPLEEGKVKMYVCGPTVYNYIHIGNARPAIVYDTVRNYLEYKGYDVQYVSNFTDVDDKLIKAANELGEDVPTVSERFIKAYFEDVGALGCRKADLHPRVMENMDAIIEFVSELIKKGYAYESEGDVYFKTRAFEGYGKLSQQSIDELRSGARIRVGEKKEDALDFALWKAAKDGEISWDSPWGKGRPGWHIECSAMVKKYLGDEIDIHAGGQDLTFPHHENEIAQSEALTGKTFAKYWLHNGYINIDNEKMSKSLGNFVLVHDIIKQYDPQLLRFFMLSVHYRHPINYSEELLEKTKNAFNRLKTAYSNLNHRLISSTNLTDNDEEWLAKIEEHRTAFEEAMDDDFNTANAISVWFDLAKVANYYMQEDNTADHVIKAFISMFDRIGSVLGLTLGEEELVDEEIEELIEKRNEARRNRDFALSDQIRDQLKSMNIILEDTAQGTRWKRGE.

C29 contributes to the Zn(2+) binding site. The 'HIGH' region motif lies at P31 to N41. Zn(2+) is bound by residues C209, H234, and E238. Residues K266–S270 carry the 'KMSKS' region motif. Residue K269 coordinates ATP. S270 carries the post-translational modification Phosphoserine.

Belongs to the class-I aminoacyl-tRNA synthetase family. As to quaternary structure, monomer. It depends on Zn(2+) as a cofactor.

The protein resides in the cytoplasm. The enzyme catalyses tRNA(Cys) + L-cysteine + ATP = L-cysteinyl-tRNA(Cys) + AMP + diphosphate. The chain is Cysteine--tRNA ligase from Bacillus velezensis (strain DSM 23117 / BGSC 10A6 / LMG 26770 / FZB42) (Bacillus amyloliquefaciens subsp. plantarum).